The primary structure comprises 90 residues: Acylphosphatase (90 aa).

One can recognise an Acylphosphatase-like domain in the interval 5–90 (SFVVRVWGLV…PPKGSGFHTN (86 aa)). Catalysis depends on residues arginine 20 and asparagine 38.

This sequence belongs to the acylphosphatase family.

It carries out the reaction an acyl phosphate + H2O = a carboxylate + phosphate + H(+). The sequence is that of Acylphosphatase (acyP) from Aeromonas hydrophila subsp. hydrophila (strain ATCC 7966 / DSM 30187 / BCRC 13018 / CCUG 14551 / JCM 1027 / KCTC 2358 / NCIMB 9240 / NCTC 8049).